The chain runs to 269 residues: 5'-nucleotidase SurE (269 aa).

Residues Asp11, Asp12, Ser43, and Asn101 each coordinate a divalent metal cation.

Belongs to the SurE nucleotidase family. Requires a divalent metal cation as cofactor.

The protein resides in the cytoplasm. It catalyses the reaction a ribonucleoside 5'-phosphate + H2O = a ribonucleoside + phosphate. Functionally, nucleotidase that shows phosphatase activity on nucleoside 5'-monophosphates. The chain is 5'-nucleotidase SurE from Synechococcus sp. (strain CC9902).